The chain runs to 224 residues: Myogenin (224 aa).

2 positions are modified to phosphoserine; by CaMK2G: serine 77 and serine 79. The 52-residue stretch at 81 to 132 (DRRRAATLREKRRLKKVNEAFEALKRSTLLNPNQRLPKVEILRSAIQYIERL) folds into the bHLH domain. The residue at position 87 (threonine 87) is a Phosphothreonine; by CaMK2G.

Homodimer and heterodimer with E12; heterodimerization enhances MYOG DNA-binding and transcriptional activities. Interacts with SMARCA4/BRG1/BAF190A. Interacts (via C-terminal region) with SSRP1 and SUPT16H; the interaction is indicative of an interaction with the FACT complex. nteracts with CSRP3. In terms of processing, phosphorylated by CAMK2G on threonine and serine amino acids in a muscle activity-dependent manner. Phosphorylation of Thr-87 impairs both DNA-binding and trans-activation functions in contracting muscles. As to expression, expressed in myoblast cells. Expressed weakly in myotubes (at protein level). Expressed strongly in denervated muscles and in satellite cells isolated from denervated muscles. Expressed weakly in innervated muscle and in satellite cells isolated from innervated muscles.

The protein resides in the nucleus. Its function is as follows. Acts as a transcriptional activator that promotes transcription of muscle-specific target genes and plays a role in muscle differentiation, cell cycle exit and muscle atrophy. Essential for the development of functional embryonic skeletal fiber muscle differentiation. However is dispensable for postnatal skeletal muscle growth; phosphorylation by CAMK2G inhibits its transcriptional activity in respons to muscle activity. Required for the recruitment of the FACT complex to muscle-specific promoter regions, thus promoting gene expression initiation. During terminal myoblast differentiation, plays a role as a strong activator of transcription at loci with an open chromatin structure previously initiated by MYOD1. Together with MYF5 and MYOD1, co-occupies muscle-specific gene promoter core regions during myogenesis. Also cooperates with myocyte-specific enhancer factor MEF2D and BRG1-dependent recruitment of SWI/SNF chromatin-remodeling enzymes to alter chromatin structure at myogenic late gene promoters. Facilitates cell cycle exit during terminal muscle differentiation through the up-regulation of miR-20a expression, which in turn represses genes involved in cell cycle progression. Binds to the E-box containing (E1) promoter region of the miR-20a gene. Also plays a role in preventing reversal of muscle cell differentiation. Contributes to the atrophy-related gene expression in adult denervated muscles. Induces fibroblasts to differentiate into myoblasts. The chain is Myogenin (Myog) from Mus musculus (Mouse).